The primary structure comprises 983 residues: Glycine dehydrogenase (decarboxylating) (983 aa).

Lys731 is subject to N6-(pyridoxal phosphate)lysine.

This sequence belongs to the GcvP family. As to quaternary structure, the glycine cleavage system is composed of four proteins: P, T, L and H. Requires pyridoxal 5'-phosphate as cofactor.

It carries out the reaction N(6)-[(R)-lipoyl]-L-lysyl-[glycine-cleavage complex H protein] + glycine + H(+) = N(6)-[(R)-S(8)-aminomethyldihydrolipoyl]-L-lysyl-[glycine-cleavage complex H protein] + CO2. In terms of biological role, the glycine cleavage system catalyzes the degradation of glycine. The P protein binds the alpha-amino group of glycine through its pyridoxal phosphate cofactor; CO(2) is released and the remaining methylamine moiety is then transferred to the lipoamide cofactor of the H protein. This Nostoc sp. (strain PCC 7120 / SAG 25.82 / UTEX 2576) protein is Glycine dehydrogenase (decarboxylating).